The sequence spans 528 residues: GMP synthase [glutamine-hydrolyzing] (528 aa).

The 192-residue stretch at 13 to 204 folds into the Glutamine amidotransferase type-1 domain; that stretch reads AIVILDFGSQ…VNHICGCEQD (192 aa). Residue C90 is the Nucleophile of the active site. Active-site residues include H178 and E180. In terms of domain architecture, GMPS ATP-PPase spans 205 to 403; sequence WTTNAFIDEA…LGLPEEIVRR (199 aa). An ATP-binding site is contributed by 232–238; it reads SGGVDSS.

As to quaternary structure, homodimer.

The enzyme catalyses XMP + L-glutamine + ATP + H2O = GMP + L-glutamate + AMP + diphosphate + 2 H(+). It functions in the pathway purine metabolism; GMP biosynthesis; GMP from XMP (L-Gln route): step 1/1. Functionally, catalyzes the synthesis of GMP from XMP. The polypeptide is GMP synthase [glutamine-hydrolyzing] (Synechococcus sp. (strain CC9902)).